The following is a 119-amino-acid chain: Large ribosomal subunit protein bL20 (119 aa).

Belongs to the bacterial ribosomal protein bL20 family.

In terms of biological role, binds directly to 23S ribosomal RNA and is necessary for the in vitro assembly process of the 50S ribosomal subunit. It is not involved in the protein synthesizing functions of that subunit. The chain is Large ribosomal subunit protein bL20 from Vesicomyosocius okutanii subsp. Calyptogena okutanii (strain HA).